Reading from the N-terminus, the 248-residue chain is MARTFFIGGNFKMNGTKASIKEIVERLNSASIPSNVEVVIAPPAAYLDHAVSLNKKAQVSVAAQNAYLKASGAFTGENSVEQIKDVGAEWVILGHSERRTYFHETDEFIADKTKFALDSGVKVILCIGETLEEKQKGITLEVVQRQLQAVLDKVQDWTNVVVAYEPVWAIGTGLAATSDDAQAIHHSIREFLAKKLSKDTAEKIRILYGGSANGKNAVTFKDKADVDGFLVGGASLKPEFVDIINSRV.

Substrate contacts are provided by N10 and K12. H95 serves as the catalytic Electrophile. E165 (proton acceptor) is an active-site residue.

The protein belongs to the triosephosphate isomerase family. As to quaternary structure, homodimer.

The catalysed reaction is D-glyceraldehyde 3-phosphate = dihydroxyacetone phosphate. It functions in the pathway carbohydrate biosynthesis; gluconeogenesis. Its pathway is carbohydrate degradation; glycolysis; D-glyceraldehyde 3-phosphate from glycerone phosphate: step 1/1. The sequence is that of Triosephosphate isomerase (TPI1) from Kluyveromyces marxianus (Yeast).